We begin with the raw amino-acid sequence, 399 residues long: Elongation factor Tu (399 aa).

A tr-type G domain is found at Lys-10–Glu-204. Residues Gly-19–Thr-26 form a G1 region. Gly-19–Thr-26 is a binding site for GTP. Thr-26 is a binding site for Mg(2+). Residues Gly-60–Asn-64 are G2. The interval Asp-81 to Gly-84 is G3. GTP contacts are provided by residues Asp-81–His-85 and Asn-136–Asp-139. Positions Asn-136–Asp-139 are G4. A G5 region spans residues Ser-174–Leu-176.

This sequence belongs to the TRAFAC class translation factor GTPase superfamily. Classic translation factor GTPase family. EF-Tu/EF-1A subfamily. In terms of assembly, monomer.

The protein localises to the cytoplasm. The catalysed reaction is GTP + H2O = GDP + phosphate + H(+). Functionally, GTP hydrolase that promotes the GTP-dependent binding of aminoacyl-tRNA to the A-site of ribosomes during protein biosynthesis. This Prochlorococcus marinus subsp. pastoris (strain CCMP1986 / NIES-2087 / MED4) protein is Elongation factor Tu.